We begin with the raw amino-acid sequence, 267 residues long: 4-hydroxy-tetrahydrodipicolinate reductase (267 aa).

8–13 (GANGRM) contacts NAD(+). R35 is a binding site for NADP(+). Residues 98–100 (GTT) and 122–125 (AANY) contribute to the NAD(+) site. H155 serves as the catalytic Proton donor/acceptor. A (S)-2,3,4,5-tetrahydrodipicolinate-binding site is contributed by H156. Residue K159 is the Proton donor of the active site. 165–166 (GT) serves as a coordination point for (S)-2,3,4,5-tetrahydrodipicolinate.

The protein belongs to the DapB family.

Its subcellular location is the cytoplasm. The enzyme catalyses (S)-2,3,4,5-tetrahydrodipicolinate + NAD(+) + H2O = (2S,4S)-4-hydroxy-2,3,4,5-tetrahydrodipicolinate + NADH + H(+). It carries out the reaction (S)-2,3,4,5-tetrahydrodipicolinate + NADP(+) + H2O = (2S,4S)-4-hydroxy-2,3,4,5-tetrahydrodipicolinate + NADPH + H(+). It participates in amino-acid biosynthesis; L-lysine biosynthesis via DAP pathway; (S)-tetrahydrodipicolinate from L-aspartate: step 4/4. Its function is as follows. Catalyzes the conversion of 4-hydroxy-tetrahydrodipicolinate (HTPA) to tetrahydrodipicolinate. This Pseudoalteromonas atlantica (strain T6c / ATCC BAA-1087) protein is 4-hydroxy-tetrahydrodipicolinate reductase.